A 1113-amino-acid polypeptide reads, in one-letter code: MVMAQQQKNAERNDEHTRRNRSPSVDSVSRVQQQSGGFAFYNQQSNHQYQQSHPRRTSFSRDGNTGYYNNHSGNKRQTYNNQRGGRSYNHRGNSNYQQNGEYSGNQGCVPKYHQRNQNYPQLQPKYSYFQPHQRPIFNSTQGYGTYSVRRSSPPSPSALSSSTANSTSNRAPTQPPILLRHAEPASDKNHQGSDHEQNHDPKIHLYRSAGTAPGGYTQCPSPYKQPPPQPPSTPSSSDKRIEQQQAEDWPTRFQHPPPQFRRGQDPMPASIELQHKTANQTMPVDIVQTNQQKTVSSYERAAQFRASASELPTDSVDAKHPCFANERMQSALIGISPQLKTQQQSPGIPIQNEAEASAVMKAMRSFQFHNWPQMSHGSYYPMPYHLENQMRPMKSGDQLPLNQQNHNLSGFPAFVGKSSLVGSSLNTRNSSEADPEEMPRIMEKLDDEVTGADHDKTIDENRRRIHKSQEPRIGTEEKALNELPRKANRRNSSCSSISSVSESSSPSALDESTLTKILPTDNFRGGRGFASPSPPTSLLSEPLSRMDVLSEKIWDYHNKVSQTDEMLQRKLHLRDMLYTAISPVFPLSGLYVVGSSLNGFGNNSSDMDLCLMITNKDLDQKNDAVVVLNLILSTLQYEKFVESQKLILAKVPILRINFAAPFDDITVDLNANNSVAIRNTHLLCYYSSYDWRVRPLVSVVKEWAKRKGINDANKSSFTSYSLVLMVIHFLQCGPTKVLPNLQQSYPNRFSNKVDVRTLNVTMALEEVADDIDQSLSEKTTLGELLIGFLDYYANEFNYDRDAISIRQGRRVERAALAVRPKIHSNSEGDKETPPPSSSASTSSIHNGGTPGIPMHHSISNPHFWRSQWRCVCIEEPFTNSNTAHSIYDEMVFEAIKKAFREAHGELQHNHDLDKLMECEPIKASTTNTGAAVFAATYEGERPLAQQPNTIACASLRVLNSIPVSSGPGHYHYQQQSNQNLSRPQRPGSNQGYQMNNNRGFNGNNQQQHQNRRSFNNQSSSNPGNGSTGPRSSRSNENVRDSSRQQNSQKGSSGVSVSKENVASTTGVPVDKKQQNSNRKDDGNRTKRSPMVQSPEPAKTKSEKTPMASSNVSQ.

Disordered stretches follow at residues Met1 to His113, Arg134 to Pro175, Leu205 to Pro266, and Leu445 to Thr513. Over residues Ser22–Ser52 the composition is skewed to low complexity. The span at Ser60–Gln106 shows a compositional bias: polar residues. A compositionally biased stretch (low complexity) spans Arg149 to Pro172. Over residues Tyr223–Thr233 the composition is skewed to pro residues. Residues Gly451–Arg485 are compositionally biased toward basic and acidic residues. Residues Ser492 to Ser507 are compositionally biased toward low complexity. Residues Asp606 and Asp608 each contribute to the Mg(2+) site. The PAP-associated domain occupies Thr780–Leu816. Disordered stretches follow at residues Ala817–Met854 and Gly966–Gln1113. Residues Tyr972–Met994 are compositionally biased toward polar residues. Composition is skewed to low complexity over residues Asn995 to Asn1035 and Gln1044 to Val1061. Residues Val1069–Arg1084 are compositionally biased toward basic and acidic residues.

The protein belongs to the DNA polymerase type-B-like family. GLD2 subfamily. In terms of assembly, interacts with gld-3. Mg(2+) is required as a cofactor. Requires Mn(2+) as cofactor. As to expression, germline-specific.

The protein localises to the cytoplasm. The catalysed reaction is RNA(n) + ATP = RNA(n)-3'-adenine ribonucleotide + diphosphate. Cytoplasmic poly(A) RNA polymerase that adds successive AMP monomers to the 3'-end of specific RNAs, forming a poly(A) tail. Acts as a regulator of mitosis/meiosis required for progression through meiotic prophase during oogenesis and spermatogenesis and for promotion of the entry into meiosis from the mitotic cell cycle. May act by regulating and activating gld-1 mRNA activity in germline. Required for polyadenylation of neg-1 mRNA during embryogenesis. The protein is Poly(A) RNA polymerase gld-2 (gld-2) of Caenorhabditis elegans.